Here is a 588-residue protein sequence, read N- to C-terminus: 3-methylmercaptopropionyl-CoA dehydrogenase (588 aa).

E435 (proton acceptor) is an active-site residue.

The protein belongs to the acyl-CoA dehydrogenase family. It depends on FAD as a cofactor.

The catalysed reaction is 3-(methylsulfanyl)propanoyl-CoA + oxidized [electron-transfer flavoprotein] + H(+) = 3-(methylsulfanyl)acryloyl-CoA + reduced [electron-transfer flavoprotein]. Its function is as follows. Involved in the assimilation of dimethylsulphoniopropionate (DMSP), an important compound in the fixation of carbon in marine phytoplankton, by mediating the conversion of 3-(methylthio)propanoyl-CoA (MMPA-CoA) to 3-(methylthio)acryloyl-CoA (MTA-CoA). This chain is 3-methylmercaptopropionyl-CoA dehydrogenase, found in Ruegeria pomeroyi (strain ATCC 700808 / DSM 15171 / DSS-3) (Silicibacter pomeroyi).